The following is a 427-amino-acid chain: Histidine--tRNA ligase (427 aa).

This sequence belongs to the class-II aminoacyl-tRNA synthetase family. As to quaternary structure, homodimer.

It is found in the cytoplasm. The enzyme catalyses tRNA(His) + L-histidine + ATP = L-histidyl-tRNA(His) + AMP + diphosphate + H(+). The protein is Histidine--tRNA ligase of Streptococcus suis (strain 98HAH33).